The chain runs to 145 residues: Hemoglobin subunit beta (145 aa).

The Globin domain occupies 1–145 (MLTAEEKAAV…VANALAHRYH (145 aa)). At threonine 11 the chain carries Phosphothreonine. Lysine 58 carries the N6-acetyllysine modification. Heme b is bound at residue histidine 62. Lysine 81 carries the N6-acetyllysine modification. Histidine 91 lines the heme b pocket. Cysteine 92 is modified (S-nitrosocysteine).

It belongs to the globin family. Heterotetramer of two alpha chains and two beta chains. As to expression, red blood cells.

Involved in oxygen transport from the lung to the various peripheral tissues. This chain is Hemoglobin subunit beta (HBB), found in Alces alces alces (European moose).